Consider the following 197-residue polypeptide: RILP-like protein 2 (197 aa).

The disordered stretch occupies residues methionine 1–leucine 24. A compositionally biased stretch (acidic residues) spans glutamate 8–glycine 17. Positions glutamate 14–alanine 96 constitute an RH1 domain. Residues valine 69–serine 153 adopt a coiled-coil conformation. Residues arginine 119 to isoleucine 184 form the RH2 domain.

Belongs to the RILPL family. In terms of assembly, homodimer. Interacts with RAC1. Interacts (via N-terminus) with MYO5A, the interaction is required for its role in dendrite formation. Interacts with RAB8A; interaction is dependent on the phosphorylation of RAB8A on 'Thr-72'. Interacts with RAB10 and RAB12; interaction is dependent on the phosphorylation of 'Thr-73' on RAB10 and 'Ser-105' on RAB12.

It localises to the cytoplasm. Its subcellular location is the cytosol. The protein localises to the cytoskeleton. The protein resides in the microtubule organizing center. It is found in the centrosome. It localises to the cell projection. Its subcellular location is the cilium. Its function is as follows. Involved in cell shape and neuronal morphogenesis, positively regulating the establishment and maintenance of dendritic spines. Plays a role in cellular protein transport, including protein transport away from primary cilia. May function via activation of RAC1 and PAK1. The polypeptide is RILP-like protein 2 (Rilpl2) (Mus musculus (Mouse)).